Here is a 300-residue protein sequence, read N- to C-terminus: Porphobilinogen deaminase (300 aa).

Cysteine 242 carries the post-translational modification S-(dipyrrolylmethanemethyl)cysteine.

The protein belongs to the HMBS family. Monomer. Dipyrromethane is required as a cofactor.

It carries out the reaction 4 porphobilinogen + H2O = hydroxymethylbilane + 4 NH4(+). The protein operates within porphyrin-containing compound metabolism; protoporphyrin-IX biosynthesis; coproporphyrinogen-III from 5-aminolevulinate: step 2/4. Functionally, tetrapolymerization of the monopyrrole PBG into the hydroxymethylbilane pre-uroporphyrinogen in several discrete steps. This is Porphobilinogen deaminase from Blochmanniella pennsylvanica (strain BPEN).